We begin with the raw amino-acid sequence, 990 residues long: MTPLRFPSNLPLRAVAFDEDQSMPHRRPIDAANDFVRRHIGPSPQDIAAMLATAGAGSLEQLVAETLPYAIRHREPLKLGAPLTESEALAHMSELGAQNQVFTSLIGQGYYGTILPTVIQRNILENPAWYTAYTPYQPEISQGRLEALFNFQTMICDLTGLDVANASLLDEGTAAAEAMALAERAAAKNAKAFFVDADTHPQTIAVLRTRAEPLGWRIIVGNPETGLEGADVFGALLQYPGSSGRLSDPRAVIAALRKKGALAVVAADLLALTLITPPGELGADIAIGSAQRFGVPMGYGGPHAAYMAVRDSLKRSLPGRIVGLSIDSHGQPAYRLALQTREQHIRREKATSNICTAQVLLAVINAMYAVYHGPDGLAAIARRVHRRTAVLAAGLQQLGFAPTHGNYFDTLTIEVGDRRDAIVARAEAENINLRINASSLGISLDETTTPATVEALWRAFGGSLDYAAVERDAGDALGTALPAALKRTSDYLTQPAFQDYRSETELLRYMRKLSDRDLALDRAMIPLGSCTMKLNATTEMMPLTWPEFGSLHPFVPKAQAAGYHALFERLETWLAEITGYDAVSLQPNSGAQGEYAGLLTIRGYHLSRGEPHRKVCLIPSSAHGTNPASAAMAGMDVVVVACDAHGDVDVDDLRAKAEAHSADLAAVMITYPSTHGVFEEHIREICDIVHAHGGQVYLDGANLNAQVGLARPGSYGADVSHLNLHKTFCIPHGGGGPGMGPIGVKAHLAPFLPGHPAEGEPLNGGLHGGGTVSAAPWGSASILTISYIYILMMGAAGLKRATEIAILNANYIAAKLHPHFPVLYRNPRGRVAHECIIDPRALKTSTGVTVDDIAKRLIDYGFHAPTMSFPVPGTLMIEPTESESKAEIDRFCDAMIAIRREIAQVEAGRYPIEQSPLRHAPHTAHDVTSAEWTRPYPRTEGCFPAPNSRTDKYWSPVGRVDNVYGDRNLICSCPPVEDYALAADYARAAE.

Lys-726 is modified (N6-(pyridoxal phosphate)lysine).

It belongs to the GcvP family. In terms of assembly, the glycine cleavage system is composed of four proteins: P, T, L and H. Pyridoxal 5'-phosphate is required as a cofactor.

The catalysed reaction is N(6)-[(R)-lipoyl]-L-lysyl-[glycine-cleavage complex H protein] + glycine + H(+) = N(6)-[(R)-S(8)-aminomethyldihydrolipoyl]-L-lysyl-[glycine-cleavage complex H protein] + CO2. The glycine cleavage system catalyzes the degradation of glycine. The P protein binds the alpha-amino group of glycine through its pyridoxal phosphate cofactor; CO(2) is released and the remaining methylamine moiety is then transferred to the lipoamide cofactor of the H protein. This is Glycine dehydrogenase (decarboxylating) from Rhodopseudomonas palustris (strain ATCC BAA-98 / CGA009).